We begin with the raw amino-acid sequence, 871 residues long: MHLSADISSALQQIEAVKKGIDESDDPKLQMQTAESLSTILGILQDPVFRTIVHVQDSLSELNAQLAQHPSMLPNDFDIDVAGNLVLSLNGGEVMYDFDEQRSSSHSHSAPGSPDKSGGVGEEPRPQSQNSKGAGVADLYATDYAQIQAIELVNDGTGLGFGIIGARNSGVIVKTILPGGVADKDGRLRSGDHILQIGDVNLHEMVSEQVAAVLRQSGTHVRLVVARPVEQSVPTPQYALEPGTAVVPTRVLVDPAELERYLISTGYPEIFGESSTASTPQTTTEDDRFVYRGETSMLIDPNIDLEELLALPETEKLQVELKKDANGLGITIAGYVCEKEELSGIFVKSVSPGSAADLSGRIRVNDRIIEVDGQSLQGYSNHQAVELLKKSGQVVNLRLERYLRGPKFEQLQQAIAANDKLPSSAPGTPSRAPMPTPVATTSSATTTPSRSITRELEEEALPAPEAFMTTPPSVTTMTTTTLSSFGAGKQLVAVRDSLDGSTKIIPTEVVPLADKTEAKNSGVITRHKYYTDPELSDDAETEIIRKWQKIVGSDVEVIVAQIKKFAVGGLGISLEGTVDVEGGREVRPHHYIRSILPDGPVGVNGVLRSGDELLEVNGERLLGMNHLEVVAILKELPLDVRMVCGRNRNSSLLPFSDDTLKKLSNNFENLLPATDRLVKAKSDGSLATAGSVADGDSVAAAAASFSKLKSRSLEPLTGLAMWSSQPQIIELVKGDRGLGFSILDYQDPLDPNDTLIVIRSLVPGGVAQLDGRLIPGDRLLFVNSINLENASLDQAVQALKGASKGVVRIGVAKPLPMTDNSLKACSNASTTSEETLDAQPSPPALPTVAPPAMPPSASMGAEPDLIPDWRN.

One can recognise an L27 domain in the interval 3-67; sequence LSADISSALQ…SLSELNAQLA (65 aa). Positions 100 to 134 are disordered; it reads EQRSSSHSHSAPGSPDKSGGVGEEPRPQSQNSKGA. 2 PDZ domains span residues 149 to 229 and 318 to 403; these read AIEL…ARPV and QVEL…ERYL. The tract at residues 420–453 is disordered; sequence KLPSSAPGTPSRAPMPTPVATTSSATTTPSRSIT. The segment covering 437 to 451 has biased composition (low complexity); that stretch reads PVATTSSATTTPSRS. Residues 559-648 enclose the PDZ 3 domain; the sequence is VAQIKKFAVG…DVRMVCGRNR (90 aa). Position 682 is a phosphoserine (Ser-682). The 87-residue stretch at 728–814 folds into the PDZ 4 domain; the sequence is IIELVKGDRG…GVVRIGVAKP (87 aa). Positions 822–833 are enriched in polar residues; it reads LKACSNASTTSE. Positions 822-871 are disordered; that stretch reads LKACSNASTTSEETLDAQPSPPALPTVAPPAMPPSASMGAEPDLIPDWRN. The span at 840–854 shows a compositional bias: pro residues; the sequence is PSPPALPTVAPPAMP.

The protein belongs to the Patj family. As to quaternary structure, component of the SAC complex, a complex composed of crb, Patj and sdt. Interacts directly with nrx via its third and fourth PDZ domains. Interacts directly with par-6, possibly mediating a link between the SAC complex and the par-6 complex, which is composed of par-6, baz and aPKC. Expressed in primary and some secondary epithelial cells such as ectodermal cells, salivary glands, foregut, hindgut and invaginating tracheal cells. Also expressed in specific cells of the peripheral nervous system. Expressed in the germline.

The protein localises to the membrane. Involved in cell polarity establishment. Probably participates in the assembly, positioning and maintenance of adherens junctions via its interaction with the SAC complex. This is Patj homolog (Patj) from Drosophila melanogaster (Fruit fly).